A 277-amino-acid chain; its full sequence is Translation initiation factor 2 subunit alpha (277 aa).

Residues 22–93 form the S1 motif domain; the sequence is GEIVVGTVQE…KRGQVDVSLK (72 aa).

Belongs to the eIF-2-alpha family. Heterotrimer composed of an alpha, a beta and a gamma chain.

Its function is as follows. eIF-2 functions in the early steps of protein synthesis by forming a ternary complex with GTP and initiator tRNA. The polypeptide is Translation initiation factor 2 subunit alpha (eif2a) (Aeropyrum pernix (strain ATCC 700893 / DSM 11879 / JCM 9820 / NBRC 100138 / K1)).